The sequence spans 366 residues: GTP-binding protein 10 (366 aa).

An Obg domain is found at 13–148 (GNFIDNLRIF…RIVHLDLKVI (136 aa)). Residues 149–344 (ADVGLVGFPN…LKSCIRKALD (196 aa)) form the OBG-type G domain. Residues 155–162 (GFPNAGKS), 202–206 (DLPGL), and 278–281 (NKMD) each bind GTP. Residues 346–355 (QDGKESDAHR) are compositionally biased toward basic and acidic residues. The interval 346–366 (QDGKESDAHRSKQLLNLQSSS) is disordered.

The protein belongs to the TRAFAC class OBG-HflX-like GTPase superfamily. OBG GTPase family.

It localises to the nucleus. The protein localises to the nucleolus. Its function is as follows. May be involved in the ribosome maturation process. The polypeptide is GTP-binding protein 10 (Gtpbp10) (Mus musculus (Mouse)).